Here is a 1519-residue protein sequence, read N- to C-terminus: DNA (cytosine-5)-methyltransferase 4 (1519 aa).

Positions 1–24 are enriched in basic and acidic residues; sequence MEMETKAGKQKKRSVDSDDDVSKE. The disordered stretch occupies residues 1–31; it reads MEMETKAGKQKKRSVDSDDDVSKERRPKRAA. Lys-583 is covalently cross-linked (Glycyl lysine isopeptide (Lys-Gly) (interchain with G-Cter in ubiquitin)). The segment at 641–668 is disordered; the sequence is ENVEEEELEEVEEEDENEEDDPEENELE. Positions 642 to 668 are enriched in acidic residues; the sequence is NVEEEELEEVEEEDENEEDDPEENELE. BAH domains follow at residues 715–849 and 916–1033; these read DVVV…FSLP and TTLK…KQFP. One can recognise an SAM-dependent MTase C5-type domain in the interval 1078–1512; sequence LATLDIFAGC…RKLKEALYLK (435 aa). Residue Cys-1183 is part of the active site.

The protein belongs to the class I-like SAM-binding methyltransferase superfamily. C5-methyltransferase family. In terms of tissue distribution, expressed at low levels in vegetative and floral organs.

It is found in the nucleus. The enzyme catalyses a 2'-deoxycytidine in DNA + S-adenosyl-L-methionine = a 5-methyl-2'-deoxycytidine in DNA + S-adenosyl-L-homocysteine + H(+). In terms of biological role, maintains chromatin CpG methylation that plays a role in genomic imprinting, regulation of embryogenesis and seed viability. Required for proper patterns of CG DNA methylation in dividing cells. This is DNA (cytosine-5)-methyltransferase 4 (MET4) from Arabidopsis thaliana (Mouse-ear cress).